We begin with the raw amino-acid sequence, 350 residues long: Delta(6)-protoilludene synthase STEHIDRAFT_64702 (350 aa).

Asp89, Asn225, Ser229, and Glu233 together coordinate Mg(2+). The D(D/E)XX(D/E) motif motif lies at Asp89–Asp93. An NSE motif motif is present at residues Asn225–Glu233. Positions 314 and 315 each coordinate (2E,6E)-farnesyl diphosphate.

This sequence belongs to the terpene synthase family. Mg(2+) serves as cofactor. Mn(2+) is required as a cofactor. Requires Ca(2+) as cofactor. It depends on Ni(2+) as a cofactor. The cofactor is Co(2+).

The enzyme catalyses (2E,6E)-farnesyl diphosphate = Delta(6)-protoilludene + diphosphate. The catalysed reaction is (2E,6E)-farnesyl diphosphate = alpha-selinene + diphosphate. With respect to regulation, ca(2+) switches the cyclization mechanism of delta(6)-protoilludene synthase from 1,11 to 1,10 cyclization which leads to the production of beta-elemene. Terpene cyclase that catalyzes the cyclization of farnesyl diphosphate (FPP) to delta(6)-protoilludene. In presence of Ca(2+), a significant switch from 1,11 to a dual 1,11/1,10 cyclization occurs, producing beta-elemene as the major product, with lower levels of delta(6)-protoilludene and (E)-beta-caryophyllene, and traces of beta-selinene and alpha-selinene. The protein is Delta(6)-protoilludene synthase STEHIDRAFT_64702 of Stereum hirsutum (strain FP-91666) (White-rot fungus).